We begin with the raw amino-acid sequence, 274 residues long: Glutamate--cysteine ligase regulatory subunit (274 aa).

The residue at position 59 (serine 59) is a Phosphoserine. Lysine 263 is subject to N6-acetyllysine.

Belongs to the aldo/keto reductase family. Glutamate--cysteine ligase light chain subfamily. As to quaternary structure, heterodimer of a catalytic heavy chain and a regulatory light chain. Most abundant in kidney. Also found in liver and testis.

The protein operates within sulfur metabolism; glutathione biosynthesis; glutathione from L-cysteine and L-glutamate: step 1/2. The chain is Glutamate--cysteine ligase regulatory subunit (Gclm) from Rattus norvegicus (Rat).